The primary structure comprises 577 residues: Arginine--tRNA ligase (577 aa).

The short motif at 122–132 (PNVAKEMHVGH) is the 'HIGH' region element.

Belongs to the class-I aminoacyl-tRNA synthetase family. Monomer.

It is found in the cytoplasm. It carries out the reaction tRNA(Arg) + L-arginine + ATP = L-arginyl-tRNA(Arg) + AMP + diphosphate. This chain is Arginine--tRNA ligase, found in Histophilus somni (strain 2336) (Haemophilus somnus).